The sequence spans 147 residues: Cyanate hydratase (147 aa).

Active-site residues include R88, E91, and S114.

This sequence belongs to the cyanase family.

The enzyme catalyses cyanate + hydrogencarbonate + 3 H(+) = NH4(+) + 2 CO2. In terms of biological role, catalyzes the reaction of cyanate with bicarbonate to produce ammonia and carbon dioxide. This is Cyanate hydratase from Acaryochloris marina (strain MBIC 11017).